Here is a 243-residue protein sequence, read N- to C-terminus: Terpene cyclase nodB (243 aa).

Helical transmembrane passes span 19–39 (ISDI…AGMI), 50–70 (MAPL…LIYP), and 75–95 (IEQG…YTAI). N111 is a glycosylation site (N-linked (GlcNAc...) asparagine). The next 4 helical transmembrane spans lie at 112 to 132 (ITLI…ALAA), 134 to 154 (IGPA…LSVG), 169 to 189 (SYTL…FAIL), and 205 to 225 (LVLW…ICLW).

This sequence belongs to the paxB family.

The protein localises to the membrane. It participates in secondary metabolite biosynthesis. Functionally, terpene cyclase; part of the gene cluster that mediates the biosynthesis of the indole diterpenes nodulisporic acids (NA). Nodulisporic acid A (NAA) and its chemically modified derivatives are of particular significance because of their highly potent insecticidal activity against blood-feeding arthropods and lack of observable adverse effects on mammals, in particular the tremogenicity associated with the paspaline-derived IDTs is not observed. The geranylgeranyl diphosphate (GGPP) synthase ggs1, localized outside of the cluster, is proposed to catalyze the first step in nodulisporic acid biosynthesis via conversion of farnesyl pyrophosphate and isopentyl pyrophosphate into geranylgeranyl pyrophosphate (GGPP). Condensation of indole-3-glycerol phosphate with GGPP by the prenyl transferase nodC then forms 3-geranylgeranylindole (3-GGI). Epoxidation by the FAD-dependent monooxygenase nodM leads to a single-epoxidized-GGI that is substrate of the terpene cyclase nodB for cyclization to yield emindole SB. The terminal methyl carbon, C28, of emindole SB is then oxidized by the cytochrome P450 monooxygenase nodW to produce nodulisporic acid F (NAF), the pentacyclic core of NAA. NAF is converted to nodulisporic acid E (NAE) via prenylation. This step is probably performed by one of the indole diterpene prenyltransferases nodD1 or nodD2. Several oxidation steps performed by the FAD-linked oxidoreductase nodO and one of the cytochrome P450 monooxygenase nodR, nodX or nodZ further convert NAE to nodulisporic acid D (NAD). NAD is substrate of cytochrome P450 monooxygenase nodJ to produce the precursor of nodulisporic acid C (NAC), converted to NAC by one of the indole diterpene prenyltransferases nodD1 or nodD2. The FAD-dependent monooxygenase nodY2 then oxidizes NAC to nodulisporic acid B (NAB). Finally NAB is converted to NAA by one of the cytochrome P450 monooxygenases nodR, nodX or nodZ. The sequence is that of Terpene cyclase nodB from Hypoxylon pulicicidum.